A 200-amino-acid polypeptide reads, in one-letter code: Small ribosomal subunit protein uS4 (200 aa).

Positions 91-150 constitute an S4 RNA-binding domain; the sequence is TRLDNVVYRLGITPTRRSARQLVSHKHITVNGKIVNIPSYALKVGDIIGLTEKTKSSNAI.

The protein belongs to the universal ribosomal protein uS4 family. In terms of assembly, part of the 30S ribosomal subunit. Contacts protein S5. The interaction surface between S4 and S5 is involved in control of translational fidelity.

One of the primary rRNA binding proteins, it binds directly to 16S rRNA where it nucleates assembly of the body of the 30S subunit. Its function is as follows. With S5 and S12 plays an important role in translational accuracy. This Amoebophilus asiaticus (strain 5a2) protein is Small ribosomal subunit protein uS4.